Here is a 247-residue protein sequence, read N- to C-terminus: Type III pantothenate kinase (247 aa).

6–13 (DVGNTHTT) provides a ligand contact to ATP. 101-104 (GADR) is a binding site for substrate. Asp-103 functions as the Proton acceptor in the catalytic mechanism. Asp-123 lines the K(+) pocket. Thr-126 provides a ligand contact to ATP. Residue Thr-177 participates in substrate binding.

The protein belongs to the type III pantothenate kinase family. In terms of assembly, homodimer. It depends on NH4(+) as a cofactor. Requires K(+) as cofactor.

It localises to the cytoplasm. The enzyme catalyses (R)-pantothenate + ATP = (R)-4'-phosphopantothenate + ADP + H(+). The protein operates within cofactor biosynthesis; coenzyme A biosynthesis; CoA from (R)-pantothenate: step 1/5. In terms of biological role, catalyzes the phosphorylation of pantothenate (Pan), the first step in CoA biosynthesis. The chain is Type III pantothenate kinase from Thermosipho melanesiensis (strain DSM 12029 / CIP 104789 / BI429).